The following is a 338-amino-acid chain: GTPase Obg (338 aa).

The Obg domain maps to 1-159; sequence MSFIDEVKIN…RWIRMELKLM (159 aa). Residues 58–79 form a disordered region; the sequence is DLRQHPHQKAGRGKNGMGSDRH. The region spanning 160-331 is the OBG-type G domain; it reads ADVGLLGMPS…LLDDIAFNLW (172 aa). GTP contacts are provided by residues 166–173, 191–195, 213–216, 283–286, and 312–314; these read GMPSVGKS, FTTLK, DIPG, NKID, and SAA. The Mg(2+) site is built by serine 173 and threonine 193.

It belongs to the TRAFAC class OBG-HflX-like GTPase superfamily. OBG GTPase family. In terms of assembly, monomer. It depends on Mg(2+) as a cofactor.

It localises to the cytoplasm. In terms of biological role, an essential GTPase which binds GTP, GDP and possibly (p)ppGpp with moderate affinity, with high nucleotide exchange rates and a fairly low GTP hydrolysis rate. Plays a role in control of the cell cycle, stress response, ribosome biogenesis and in those bacteria that undergo differentiation, in morphogenesis control. The sequence is that of GTPase Obg from Citrifermentans bemidjiense (strain ATCC BAA-1014 / DSM 16622 / JCM 12645 / Bem) (Geobacter bemidjiensis).